A 477-amino-acid polypeptide reads, in one-letter code: TNF receptor-associated factor family protein DDB_G0278133 (477 aa).

Residues 45 to 88 (CDICTLELFIESEPKALQCKEGHLACRRCWERYLSTNKQCMTCK) form an RING-type; degenerate zinc finger. 2 TRAF-type zinc fingers span residues 160-211 (NHYK…SSLS) and 212-267 (DHHK…SKMQ). Residues 271–326 (LEHSVTKLMNQNEIIKKDNQNLDQEKKIEEIKLKLNNLLNNYIQLKNEIAVLKQNS) adopt a coiled-coil conformation. Residues 331 to 463 (VYSNKWIIPE…FLNEKGELEI (133 aa)) enclose the MATH domain.

It belongs to the TNF receptor-associated factor family. A subfamily.

The protein resides in the cytoplasm. In terms of biological role, probable adapter protein and signal transducer that links members of the tumor necrosis factor receptor family to different signaling pathways by association with the receptor cytoplasmic domain and kinases. This Dictyostelium discoideum (Social amoeba) protein is TNF receptor-associated factor family protein DDB_G0278133.